The sequence spans 332 residues: Adenosine deaminase (332 aa).

Histidine 12 and histidine 14 together coordinate Zn(2+). Positions 14, 16, and 170 each coordinate substrate. Residue histidine 197 coordinates Zn(2+). Catalysis depends on glutamate 200, which acts as the Proton donor. Aspartate 278 provides a ligand contact to Zn(2+). Residue aspartate 279 coordinates substrate.

The protein belongs to the metallo-dependent hydrolases superfamily. Adenosine and AMP deaminases family. Adenosine deaminase subfamily. Requires Zn(2+) as cofactor.

It catalyses the reaction adenosine + H2O + H(+) = inosine + NH4(+). The enzyme catalyses 2'-deoxyadenosine + H2O + H(+) = 2'-deoxyinosine + NH4(+). Functionally, catalyzes the hydrolytic deamination of adenosine and 2-deoxyadenosine. This chain is Adenosine deaminase, found in Erwinia tasmaniensis (strain DSM 17950 / CFBP 7177 / CIP 109463 / NCPPB 4357 / Et1/99).